The following is a 359-amino-acid chain: MNMTFRWYGRGNDTVTLEYVKQIPGVKGIVWALHQKPVGDVWEKEEIRAETEYIQSYGFHAEVVESVNVHEAIKLGNEERGRYIENYKQTIRNLAGFGVKVICYNFMPVFDWTRTDMFRPLEDGSTALFFEKAKVESLDPQELIRTVEEASDMTLPGWEPEKLARIKELFAAYRTVDEEKLWDNLSFFLQEILPVAEAYGVQMAIHPDDPPWPIFGLPRIITGEASYKKLRAISDSPSNCITLCTGSMGANPANDMVEIAKTYAGIAPFSHIRNVKIYENGDFIETSHLTKDGSINIQGVMEELHKQDYEGYVRPDHGRHLWGEQCRPGYGLYDRALGIMYLNGLWDAYEAMAKKEVGI.

It belongs to the mannonate dehydratase family. It depends on Fe(2+) as a cofactor. Mn(2+) serves as cofactor.

It carries out the reaction D-mannonate = 2-dehydro-3-deoxy-D-gluconate + H2O. It functions in the pathway carbohydrate metabolism; pentose and glucuronate interconversion. Catalyzes the dehydration of D-mannonate. The polypeptide is Mannonate dehydratase (uxuA) (Bacillus subtilis (strain 168)).